The primary structure comprises 354 residues: Protein RecA (354 aa).

ATP is bound at residue glycine 65 to threonine 72.

The protein belongs to the RecA family.

It is found in the cytoplasm. In terms of biological role, can catalyze the hydrolysis of ATP in the presence of single-stranded DNA, the ATP-dependent uptake of single-stranded DNA by duplex DNA, and the ATP-dependent hybridization of homologous single-stranded DNAs. It interacts with LexA causing its activation and leading to its autocatalytic cleavage. This Pseudomonas savastanoi pv. phaseolicola (strain 1448A / Race 6) (Pseudomonas syringae pv. phaseolicola (strain 1448A / Race 6)) protein is Protein RecA.